A 257-amino-acid polypeptide reads, in one-letter code: Putative hydro-lyase Bamb_5282 (257 aa).

Belongs to the D-glutamate cyclase family.

The sequence is that of Putative hydro-lyase Bamb_5282 from Burkholderia ambifaria (strain ATCC BAA-244 / DSM 16087 / CCUG 44356 / LMG 19182 / AMMD) (Burkholderia cepacia (strain AMMD)).